Here is a 159-residue protein sequence, read N- to C-terminus: Small ribosomal subunit protein uS4 (159 aa).

The S4 RNA-binding domain occupies 106–158 (RRLQTLVFRMGLAKSIHHARQLVVHGHVLVAGRRVTSPGFLVPRELEDKITIE).

The protein belongs to the universal ribosomal protein uS4 family. In terms of assembly, part of the 30S ribosomal subunit. Contacts protein S5. The interaction surface between S4 and S5 is involved in control of translational fidelity.

One of the primary rRNA binding proteins, it binds directly to 16S rRNA where it nucleates assembly of the body of the 30S subunit. In terms of biological role, with S5 and S12 plays an important role in translational accuracy. This chain is Small ribosomal subunit protein uS4, found in Pyrobaculum calidifontis (strain DSM 21063 / JCM 11548 / VA1).